Reading from the N-terminus, the 150-residue chain is MAASQCLCCSKFLFQRQNLACFLTNPHCGSLVNADGHGEVWTDWNNMSKFFQYGWRCTTNENTYSNRTLMGNWNQERYDLRNIVQPKPLPSQFGHYFETTYDTSYNNKMPLSTHRFKREPHWFPGHQPELDPPRYKCTEKSTYMNSYSKP.

Mn regions lie at residues 99 to 110 (TTYDTSYNNKMP) and 140 to 150 (KSTYMNSYSKP).

This sequence belongs to the CFAP68 family. Microtubule inner protein component of sperm flagellar doublet microtubules.

The protein resides in the cytoplasm. Its subcellular location is the cytoskeleton. It is found in the cilium axoneme. The protein localises to the flagellum axoneme. It localises to the nucleus. The protein resides in the cell projection. Its subcellular location is the cilium. Microtubule inner protein (MIP) part of the dynein-decorated doublet microtubules (DMTs) in cilia axoneme, which is required for motile cilia beating. The chain is Cilia- and flagella-associated protein 68 from Homo sapiens (Human).